The chain runs to 391 residues: Matrix metalloproteinase-23 (391 aa).

Residues 1-18 lie on the Cytoplasmic side of the membrane; the sequence is MGCRACLRPEASGAVQGR. The propeptide occupies 1–79; sequence MGCRACLRPE…LTMSVTRRRR (79 aa). The helical transmembrane segment at 19–39 threads the bilayer; sequence WLGAALSGLCLLSALALLEWL. At 40–391 the chain is on the lumenal side; the sequence is GAPTETAWRA…TYSWRVRVRN (352 aa). N-linked (GlcNAc...) asparagine glycans are attached at residues asparagine 93 and asparagine 149. Histidine 212 serves as a coordination point for Zn(2+). The active site involves glutamate 213. Zn(2+)-binding residues include histidine 216 and histidine 222. Asparagine 233 is a glycosylation site (N-linked (GlcNAc...) asparagine). In terms of domain architecture, ShKT spans 256 to 290; the sequence is CLDRIFVCASWARKGFCDVRQRLMKRLCPRSCDFC. Cystine bridges form between cysteine 256–cysteine 290, cysteine 263–cysteine 283, and cysteine 272–cysteine 287. Residues 298–383 enclose the Ig-like C2-type domain; that stretch reads VATTTSPTRT…RRHQRVLSTY (86 aa). An N-linked (GlcNAc...) asparagine glycan is attached at asparagine 317. A disulfide bond links cysteine 322 and cysteine 371.

It belongs to the peptidase M10A family. Zn(2+) serves as cofactor. N-glycosylated. Post-translationally, proteolytic cleavage might yield an active form. In terms of tissue distribution, expressed at relatively high level in heart, lung and spleen. Not detected in brain, liver, skeletal muscle, kidney and testis.

Its subcellular location is the endoplasmic reticulum membrane. It localises to the membrane. Its activity is regulated as follows. Inhibited by TIMP2. In terms of biological role, protease. May regulate the surface expression of some potassium channels by retaining them in the endoplasmic reticulum. This chain is Matrix metalloproteinase-23 (Mmp23), found in Mus musculus (Mouse).